The primary structure comprises 298 residues: 4-hydroxy-tetrahydrodipicolinate synthase (298 aa).

Thr51 provides a ligand contact to pyruvate. Tyr139 acts as the Proton donor/acceptor in catalysis. Catalysis depends on Lys167, which acts as the Schiff-base intermediate with substrate. Ile209 provides a ligand contact to pyruvate.

Belongs to the DapA family. As to quaternary structure, homotetramer; dimer of dimers.

It localises to the cytoplasm. The enzyme catalyses L-aspartate 4-semialdehyde + pyruvate = (2S,4S)-4-hydroxy-2,3,4,5-tetrahydrodipicolinate + H2O + H(+). The protein operates within amino-acid biosynthesis; L-lysine biosynthesis via DAP pathway; (S)-tetrahydrodipicolinate from L-aspartate: step 3/4. In terms of biological role, catalyzes the condensation of (S)-aspartate-beta-semialdehyde [(S)-ASA] and pyruvate to 4-hydroxy-tetrahydrodipicolinate (HTPA). In Haemophilus influenzae (strain PittGG), this protein is 4-hydroxy-tetrahydrodipicolinate synthase.